The primary structure comprises 259 residues: Flap endonuclease Xni (259 aa).

Residue aspartate 109 coordinates Mg(2+). A 5'-3' exonuclease domain is found at 165–255 (LKPEQLADYW…FNLQDIRYEK (91 aa)). 4 residues coordinate K(+): leucine 176, alanine 177, isoleucine 187, and valine 190. Residues 189–194 (GVGPKA) form an interaction with DNA region.

This sequence belongs to the Xni family. Mg(2+) serves as cofactor. Requires K(+) as cofactor.

In terms of biological role, has flap endonuclease activity. During DNA replication, flap endonucleases cleave the 5'-overhanging flap structure that is generated by displacement synthesis when DNA polymerase encounters the 5'-end of a downstream Okazaki fragment. The sequence is that of Flap endonuclease Xni from Aliivibrio fischeri (strain ATCC 700601 / ES114) (Vibrio fischeri).